Here is a 792-residue protein sequence, read N- to C-terminus: Probable exo-1,4-beta-xylosidase xlnD (792 aa).

The N-terminal stretch at 1-20 is a signal peptide; that stretch reads MSAIKSIATVLAAILPSVLA. N-linked (GlcNAc...) asparagine glycans are attached at residues Asn23, Asn87, Asn142, and Asn246. Asp310 is an active-site residue. 10 N-linked (GlcNAc...) asparagine glycosylation sites follow: Asn326, Asn385, Asn391, Asn404, Asn438, Asn475, Asn479, Asn516, Asn677, and Asn699.

The protein belongs to the glycosyl hydrolase 3 family.

The protein localises to the secreted. It catalyses the reaction Hydrolysis of (1-&gt;4)-beta-D-xylans, to remove successive D-xylose residues from the non-reducing termini.. It functions in the pathway glycan degradation; xylan degradation. In terms of biological role, xylan 1,4-beta-xylosidase involved in the hydrolysis of xylan, a major structural heterogeneous polysaccharide found in plant biomass representing the second most abundant polysaccharide in the biosphere, after cellulose. The sequence is that of Probable exo-1,4-beta-xylosidase xlnD (xlnD) from Aspergillus clavatus (strain ATCC 1007 / CBS 513.65 / DSM 816 / NCTC 3887 / NRRL 1 / QM 1276 / 107).